Consider the following 480-residue polypeptide: uncharacterized protein (480 aa).

An N-terminal signal peptide occupies residues 1–21 (MSRYFSFFFLALFLHYRIIVA). 2 disordered regions span residues 38-72 (SSHL…SAEC) and 116-147 (SPLI…NDQT). The span at 51–60 (LTQSHSSLSD) shows a compositional bias: low complexity. Residues 133 to 144 (LKTSSEAQGDTN) are compositionally biased toward polar residues. A helical membrane pass occupies residues 153–173 (YAVEIACVCFLIALAINYFVG). The interval 404 to 480 (QARNKTESGR…VPKMKMSRSH (77 aa)) is disordered. Residues 407 to 465 (NKTESGRQKAAEEAYKELHNARQEALQKKKAEKKKMMEEAEAKMSAEVIRKKEAKERAR) are compositionally biased toward basic and acidic residues. Positions 411-467 (SGRQKAAEEAYKELHNARQEALQKKKAEKKKMMEEAEAKMSAEVIRKKEAKERARQV) form a coiled coil. Residues 466 to 480 (QVKKAVPKMKMSRSH) show a composition bias toward basic residues.

The protein localises to the membrane. This is an uncharacterized protein from Arabidopsis thaliana (Mouse-ear cress).